Here is a 399-residue protein sequence, read N- to C-terminus: Probable aspartate/prephenate aminotransferase (399 aa).

The L-aspartate site is built by G39, W125, and N175. K239 is modified (N6-(pyridoxal phosphate)lysine). R375 is an L-aspartate binding site.

This sequence belongs to the class-I pyridoxal-phosphate-dependent aminotransferase family. As to quaternary structure, homodimer. The cofactor is pyridoxal 5'-phosphate.

It is found in the cytoplasm. It catalyses the reaction L-aspartate + 2-oxoglutarate = oxaloacetate + L-glutamate. The catalysed reaction is L-arogenate + 2-oxoglutarate = prephenate + L-glutamate. Catalyzes the reversible conversion of aspartate and 2-oxoglutarate to glutamate and oxaloacetate. Can also transaminate prephenate in the presence of glutamate. The sequence is that of Probable aspartate/prephenate aminotransferase (aatA) from Rickettsia bellii (strain RML369-C).